The chain runs to 89 residues: Translation initiation factor IF-1, chloroplastic (89 aa).

The S1-like domain maps to 1–72 (MKKQDLIDME…TKGRIIYRLR (72 aa)).

Belongs to the IF-1 family. Component of the 30S ribosomal translation pre-initiation complex which assembles on the 30S ribosome in the order IF-2 and IF-3, IF-1 and N-formylmethionyl-tRNA(fMet); mRNA recruitment can occur at any time during PIC assembly.

The protein resides in the plastid. Its subcellular location is the chloroplast. Functionally, one of the essential components for the initiation of protein synthesis. Stabilizes the binding of IF-2 and IF-3 on the 30S subunit to which N-formylmethionyl-tRNA(fMet) subsequently binds. Helps modulate mRNA selection, yielding the 30S pre-initiation complex (PIC). Upon addition of the 50S ribosomal subunit IF-1, IF-2 and IF-3 are released leaving the mature 70S translation initiation complex. The protein is Translation initiation factor IF-1, chloroplastic of Angiopteris evecta (Mule's foot fern).